The following is a 389-amino-acid chain: Lipid-A-disaccharide synthase (389 aa).

It belongs to the LpxB family.

The enzyme catalyses a lipid X + a UDP-2-N,3-O-bis[(3R)-3-hydroxyacyl]-alpha-D-glucosamine = a lipid A disaccharide + UDP + H(+). It participates in bacterial outer membrane biogenesis; LPS lipid A biosynthesis. Functionally, condensation of UDP-2,3-diacylglucosamine and 2,3-diacylglucosamine-1-phosphate to form lipid A disaccharide, a precursor of lipid A, a phosphorylated glycolipid that anchors the lipopolysaccharide to the outer membrane of the cell. The sequence is that of Lipid-A-disaccharide synthase from Burkholderia ambifaria (strain MC40-6).